The sequence spans 72 residues: Translation initiation factor IF-1 2 (72 aa).

One can recognise an S1-like domain in the interval 1 to 72 (MAKEDAIEVD…KRGRITYRMK (72 aa)).

It belongs to the IF-1 family. As to quaternary structure, component of the 30S ribosomal translation pre-initiation complex which assembles on the 30S ribosome in the order IF-2 and IF-3, IF-1 and N-formylmethionyl-tRNA(fMet); mRNA recruitment can occur at any time during PIC assembly.

The protein localises to the cytoplasm. In terms of biological role, one of the essential components for the initiation of protein synthesis. Stabilizes the binding of IF-2 and IF-3 on the 30S subunit to which N-formylmethionyl-tRNA(fMet) subsequently binds. Helps modulate mRNA selection, yielding the 30S pre-initiation complex (PIC). Upon addition of the 50S ribosomal subunit IF-1, IF-2 and IF-3 are released leaving the mature 70S translation initiation complex. The sequence is that of Translation initiation factor IF-1 2 from Nitratidesulfovibrio vulgaris (strain DP4) (Desulfovibrio vulgaris).